Consider the following 714-residue polypeptide: Fatty acid oxidation complex subunit alpha (714 aa).

The enoyl-CoA hydratase stretch occupies residues methionine 1–proline 190. Residues glycine 306–histidine 714 are 3-hydroxyacyl-CoA dehydrogenase.

The protein in the N-terminal section; belongs to the enoyl-CoA hydratase/isomerase family. It in the central section; belongs to the 3-hydroxyacyl-CoA dehydrogenase family. Heterotetramer of two alpha chains (FadJ) and two beta chains (FadI).

It is found in the cytoplasm. The catalysed reaction is a (3S)-3-hydroxyacyl-CoA = a (2E)-enoyl-CoA + H2O. It carries out the reaction a 4-saturated-(3S)-3-hydroxyacyl-CoA = a (3E)-enoyl-CoA + H2O. The enzyme catalyses a (3S)-3-hydroxyacyl-CoA + NAD(+) = a 3-oxoacyl-CoA + NADH + H(+). It catalyses the reaction (3S)-3-hydroxybutanoyl-CoA = (3R)-3-hydroxybutanoyl-CoA. It functions in the pathway lipid metabolism; fatty acid beta-oxidation. Its function is as follows. Catalyzes the formation of a hydroxyacyl-CoA by addition of water on enoyl-CoA. Also exhibits 3-hydroxyacyl-CoA epimerase and 3-hydroxyacyl-CoA dehydrogenase activities. In Escherichia fergusonii (strain ATCC 35469 / DSM 13698 / CCUG 18766 / IAM 14443 / JCM 21226 / LMG 7866 / NBRC 102419 / NCTC 12128 / CDC 0568-73), this protein is Fatty acid oxidation complex subunit alpha.